A 262-amino-acid polypeptide reads, in one-letter code: MAVISMKQLLEAGVHFGHQTRRWNPKMKKYIFTERNGIYIIDLQKTVKKVEEAYNFIKQVSEDGGRVLFVGTKKQAQESVKAEAERAGQFYVNQRWLGGILTNYKTISKRIKRISEIEKMEEDGLFDVLPKKEVVELKKEYDRLIKFLGGIRDMKSMPQALFVVDPRKERNAIAEARKLNIPIVGIVDTNCDPDEIDYVIPANDDAIRAVKLLTGKMADAVLEGQQGVSNDEVAAEQNINLDEKEESQEAESTEENTTVESN.

Residues 240 to 262 are disordered; that stretch reads NLDEKEESQEAESTEENTTVESN. Positions 243–254 are enriched in acidic residues; it reads EKEESQEAESTE.

This sequence belongs to the universal ribosomal protein uS2 family.

The polypeptide is Small ribosomal subunit protein uS2 (Staphylococcus haemolyticus (strain JCSC1435)).